A 158-amino-acid polypeptide reads, in one-letter code: Disulfide bond formation protein B (158 aa).

Topologically, residues 1–7 (MKNSRPV) are cytoplasmic. The helical transmembrane segment at 8-24 (LFAVALASLLLLAVALY) threads the bilayer. At 25–42 (LQHVENMLPCPLCVIQRY) the chain is on the periplasmic side. An intrachain disulfide couples Cys-34 to Cys-37. Residues 43–57 (AFAAIALICLVTAFR) traverse the membrane as a helical segment. The Cytoplasmic segment spans residues 58 to 63 (TEVTAR). The chain crosses the membrane as a helical span at residues 64–81 (IGAALAALASLAGAGVAG). Residues 82–136 (WHIYIKAHPTVSCGIDPLETSLNTIPTAKLLPFLLQADGLCTTEYAPIMGLSIPQ) lie on the Periplasmic side of the membrane. Residues Cys-94 and Cys-122 are joined by a disulfide bond. Residues 137 to 155 (WALVWFIVIALFLLHTAFR) traverse the membrane as a helical segment. Topologically, residues 156–158 (KKS) are cytoplasmic.

It belongs to the DsbB family.

The protein resides in the cell inner membrane. In terms of biological role, required for disulfide bond formation in some periplasmic proteins. Acts by oxidizing the DsbA protein. The polypeptide is Disulfide bond formation protein B (Herminiimonas arsenicoxydans).